Reading from the N-terminus, the 241-residue chain is L-aspartate dehydrogenase (241 aa).

Positions 109 and 164 each coordinate NAD(+). Histidine 193 is a catalytic residue.

It belongs to the L-aspartate dehydrogenase family.

The enzyme catalyses L-aspartate + NADP(+) + H2O = oxaloacetate + NH4(+) + NADPH + H(+). It catalyses the reaction L-aspartate + NAD(+) + H2O = oxaloacetate + NH4(+) + NADH + H(+). Its pathway is cofactor biosynthesis; NAD(+) biosynthesis; iminoaspartate from L-aspartate (dehydrogenase route): step 1/1. In terms of biological role, specifically catalyzes the NAD or NADP-dependent dehydrogenation of L-aspartate to iminoaspartate. The sequence is that of L-aspartate dehydrogenase from Thermotoga sp. (strain RQ2).